A 180-amino-acid polypeptide reads, in one-letter code: MNPAPNLVMVGPMGAGKSCIGRRLAERFGLEFVDVDQAIVDQVGSSIPAIFEQHGEARFRQYEAQILQALLEQDNKLISTGGGAVLDPRNRERICARGFVVYLHVSVPAQLTRLARDRNRPLLQRADREQVLHAMAAHRTPLYRQVADLSLETDHLSPAEATAQLVLRLAAQWRMSSTPA.

14-19 (GAGKSC) is an ATP binding site. A Mg(2+)-binding site is contributed by Ser-18. Substrate-binding residues include Asp-36, Arg-60, and Gly-82. Residue Arg-120 participates in ATP binding. Arg-139 serves as a coordination point for substrate.

The protein belongs to the shikimate kinase family. Monomer. Mg(2+) is required as a cofactor.

Its subcellular location is the cytoplasm. The enzyme catalyses shikimate + ATP = 3-phosphoshikimate + ADP + H(+). It functions in the pathway metabolic intermediate biosynthesis; chorismate biosynthesis; chorismate from D-erythrose 4-phosphate and phosphoenolpyruvate: step 5/7. In terms of biological role, catalyzes the specific phosphorylation of the 3-hydroxyl group of shikimic acid using ATP as a cosubstrate. The protein is Shikimate kinase of Xanthomonas euvesicatoria pv. vesicatoria (strain 85-10) (Xanthomonas campestris pv. vesicatoria).